Here is a 2898-residue protein sequence, read N- to C-terminus: Pericentrin (2898 aa).

A disordered region spans residues 1–117 (MEDEQEQRRR…QPPPPQTAHS (117 aa)). Basic residues predominate over residues 34–44 (SKKKTAKRKGS). Phosphoserine is present on S44. 2 coiled-coil regions span residues 127–343 (LNNM…IRLL) and 382–434 (AQQQ…DSLE). The tract at residues 429–460 (REDSLESTEISSSCVLPEETSGREGKEPPDPL) is disordered. Positions 448–457 (TSGREGKEPP) are enriched in basic and acidic residues. Coiled coils occupy residues 468-527 (KVQE…LREK), 611-696 (CALQ…LETH), 727-787 (VADV…SLRM), and 872-939 (SQDQ…LRRL). Position 1022 is a phosphoserine (S1022). Coiled-coil stretches lie at residues 1069–1383 (EREF…QENM), 1429–1482 (NEVV…SLMG), and 1529–1593 (QLLA…AKEA). S1437 is modified (phosphoserine). Disordered stretches follow at residues 1745 to 1786 (VASR…DDVL), 1815 to 1880 (TQEK…PLTP), and 1958 to 1979 (TSPS…GPDI). 2 stretches are compositionally biased toward polar residues: residues 1747-1766 (SRDT…SENG) and 1817-1834 (EKLT…SGHS). Residues 1801–1822 (NQDLLVQVEMPDFPTQEKLTSQ) are interaction with CDK5RAP2. Phosphoserine occurs at positions 1828, 1859, 1860, and 1959. The segment covering 1963 to 1976 (ELARRSDGSRKSDG) has biased composition (basic and acidic residues). Residue S1987 is modified to Phosphoserine. A compositionally biased stretch (polar residues) spans 2046–2055 (SESQDPSSAL). The segment at 2046–2088 (SESQDPSSALNKGEPRDPLDGFPRDSQALSEVTTDKGEKESLE) is disordered. Composition is skewed to basic and acidic residues over residues 2058–2068 (GEPRDPLDGFP) and 2078–2088 (TTDKGEKESLE). S2128 carries the post-translational modification Phosphoserine. Coiled coils occupy residues 2211–2403 (KVEQ…EALQ) and 2429–2590 (HALL…ELSM). 2 disordered regions span residues 2509–2532 (VSGG…QFQE) and 2653–2684 (NRQS…QTTS). The segment at 2545-2810 (LCAAGLLTSF…SQRQRSPSGP (266 aa)) is interaction with NEK2. Positions 2653 to 2671 (NRQSKSSLKQDGTDLQSSL) are enriched in polar residues. The calmodulin-binding stretch occupies residues 2758 to 2771 (KFRTAVRVVIAVLR). The segment at 2787-2898 (ALVHPKSTRH…QKSCHQKIKQ (112 aa)) is disordered. Residues 2792 to 2802 (KSTRHGHRTSQ) show a composition bias toward basic residues. The span at 2845-2860 (TSTPSSRLERSLTASQ) shows a compositional bias: polar residues. Basic and acidic residues predominate over residues 2861–2874 (DPEHSLTEYIHHLE). S2865 carries the phosphoserine modification.

As to quaternary structure, interacts with DISC1 and PCM1. Binds calmodulin. Interacts with CEP131. Interacts with CDK5RAP2; the interaction is leading to centrosomal localization of PCNT and CDK5RAP2. Interacts with CHD3. Interacts with CHD4; the interaction regulates centrosome integrity. Interacts with NEK2. Interacts with CCDC13. Interacts with CEP68. Interacts with ATF5; the ATF5:PCNT:polyglutamylated tubulin (PGT) tripartite unites the mother centriole and the pericentriolar material (PCM) in the centrosome. Cleaved during mitotis which leads to removal of CDK5RAP2 from the centrosome and promotes centriole disengagement and subsequent centriole separation. The C-terminal fragment is rapidly degraded following cleavage. Post-translationally, ubiquitinated by TRIM43; leading to proteasomal degradation. As to expression, expressed in heart and lung (at protein level). Expressed in kidney, thymus, liver, brain, muscle, testis, spleen, lung and heart.

It localises to the cytoplasm. It is found in the cytoskeleton. Its subcellular location is the microtubule organizing center. The protein resides in the centrosome. Integral component of the filamentous matrix of the centrosome involved in the initial establishment of organized microtubule arrays in both mitosis and meiosis. Plays a role, together with DISC1, in the microtubule network formation. Is an integral component of the pericentriolar material (PCM). May play an important role in preventing premature centrosome splitting during interphase by inhibiting NEK2 kinase activity at the centrosome. The polypeptide is Pericentrin (Pcnt) (Mus musculus (Mouse)).